A 193-amino-acid polypeptide reads, in one-letter code: MAQAGLLIWLFFTILLLDLTCTQSAKLKTQKDHRSKEKDGDLKTQIDKLWREINSLKEMQALQTVCLRGTKIHKKCYLSFEETKHFHEANEDCIAKGGTLAIPRDSEENNALRDYGKKSLHGSGEFWLGINDMVNEGKFVDVNGVAITYFNWERIPKGGKRKNCALLNQASQGKWVDEVCRSLKKYICEFIIP.

An N-terminal signal peptide occupies residues 1–24 (MAQAGLLIWLFFTILLLDLTCTQS). Intrachain disulfides connect Cys-66–Cys-76, Cys-93–Cys-188, and Cys-164–Cys-180. The 118-residue stretch at 72-189 (IHKKCYLSFE…CRSLKKYICE (118 aa)) folds into the C-type lectin domain.

It is found in the secreted. The sequence is that of C-type lectin domain family 3 member A homolog (clec3a) from Xenopus laevis (African clawed frog).